A 414-amino-acid chain; its full sequence is Enterobactin exporter EntS (414 aa).

At 1-21 (MNRQSWLLNLSLLKTHPAFRA) the chain is on the cytoplasmic side. A helical transmembrane segment spans residues 22–42 (VFLARFISIVSLGLLGVAVPV). Residues 43–55 (QIQMMTHSTWQVG) are Periplasmic-facing. A helical membrane pass occupies residues 56 to 76 (LSVTLTGGAMFIGLMVGGVLA). Residues 77-83 (DRYERKK) lie on the Cytoplasmic side of the membrane. The chain crosses the membrane as a helical span at residues 84-104 (VILLARGTCGIGFIGLCVNAL). Topologically, residues 105-109 (LPEPS) are periplasmic. The helical transmembrane segment at 110 to 130 (LLAIYLLGLWDGFFASLGVTA) threads the bilayer. Topologically, residues 131–156 (LLAATPALVGRENLMQAGAITMLTVR) are cytoplasmic. Residues 157–177 (LGSVISPMLGGILLASGGVAW) form a helical membrane-spanning segment. Asparagine 178 is a topological domain (periplasmic). The helical transmembrane segment at 179 to 199 (YGLAAAGTFITLLPLLTLPRL) threads the bilayer. Residues 200–218 (PVPPQPRENPFIALLAAFR) are Cytoplasmic-facing. A helical transmembrane segment spans residues 219 to 239 (FLLASPLIGGIALLGGLVTMA). The Periplasmic segment spans residues 240–256 (SAVRVLYPALAMSWQMS). The helical transmembrane segment at 257–277 (AAQIGLLYAAIPLGAAIGALT) threads the bilayer. Residues 278 to 287 (SGQLAHSVRP) lie on the Cytoplasmic side of the membrane. The chain crosses the membrane as a helical span at residues 288 to 307 (GLIMLVSTVGSFLAVGLFAI). Over 308 to 313 (MPIWIA) the chain is Periplasmic. The chain crosses the membrane as a helical span at residues 314–336 (GVICLALFGWLSAISSLLQYTLL). At 337-356 (QTQTPENMLGRMNGLWTAQN) the chain is on the cytoplasmic side. A helical membrane pass occupies residues 357-377 (VTGDAIGAALLGGLGAMMTPV). Residue alanine 378 is a topological domain, periplasmic. A helical transmembrane segment spans residues 379 to 399 (SASVSGFGLVIIGLLLLLVLG). The Cytoplasmic segment spans residues 400–414 (ELRRFRQTPPVSDAG).

This sequence belongs to the major facilitator superfamily. EntS (TC 2.A.1.38) family.

It localises to the cell inner membrane. Functionally, component of an export pathway for enterobactin. In Salmonella typhi, this protein is Enterobactin exporter EntS.